We begin with the raw amino-acid sequence, 879 residues long: Prostaglandin F2 receptor negative regulator (879 aa).

An N-terminal signal peptide occupies residues 1–25 (MGRLASRPLLLALLSLALCRGRVVR). Ig-like C2-type domains are found at residues 26–129 (VPTA…ATVQ) and 149–268 (PSAR…KAVE). The Extracellular segment spans residues 26-832 (VPTATLVRVV…MDVLNAFKYP (807 aa)). Disulfide bonds link Cys-43–Cys-119 and Cys-169–Cys-247. N-linked (GlcNAc...) asparagine glycosylation occurs at Asn-44. Position 271 is a phosphothreonine (Thr-271). Ig-like C2-type domains follow at residues 276–394 (PSVL…EAVS), 406–536 (PDYQ…DVFS), 544–662 (ALED…AWSP), and 688–813 (PIFN…AEIH). N-linked (GlcNAc...) asparagine glycosylation is found at Asn-286, Asn-300, Asn-383, and Asn-413. Cys-299 and Cys-373 form a disulfide bridge. The short motif at 424–427 (PTEL) is the Endoplasmic reticulum retention signal element. A disulfide bridge links Cys-429 with Cys-515. Residues Asn-525, Asn-600, Asn-618, and Asn-691 are each glycosylated (N-linked (GlcNAc...) asparagine). Residues Cys-571 and Cys-655 are joined by a disulfide bond. The short motif at 703–705 (RGD) is the Cell attachment site element. A disulfide bridge connects residues Cys-711 and Cys-793. Residues 833–853 (LLIGVGLSTVIGLLSCLIGYC) form a helical membrane-spanning segment. Over 854-879 (SSHWCCKKEVQETRRERRRLMSMEMD) the chain is Cytoplasmic.

Interacts with CD9 and CD81. Part of a complex composed of CD9, CD81 and IGSF8. Also seems to interact with CD63, CD82 and CD151.

Its subcellular location is the endoplasmic reticulum membrane. It localises to the golgi apparatus. It is found in the trans-Golgi network membrane. In terms of biological role, inhibits the binding of prostaglandin F2-alpha (PGF2-alpha) to its specific FP receptor, by decreasing the receptor number rather than the affinity constant. Functional coupling with the prostaglandin F2-alpha receptor seems to occur. In myoblasts, associates with tetraspanins CD9 and CD81 to prevent myotube fusion during muscle regeneration. This is Prostaglandin F2 receptor negative regulator (PTGFRN) from Homo sapiens (Human).